A 446-amino-acid polypeptide reads, in one-letter code: Golgi reassembly-stacking protein 1 (446 aa).

Residues 1–20 (MGLGASSEQPAGGEGFHLHG) are disordered. Glycine 2 carries the N-myristoyl glycine lipid modification. 2 consecutive PDZ GRASP-type domains span residues 14-104 (EGFH…FCSF) and 110-198 (HVWH…YGYL). Positions 14–214 (EGFHLHGVQE…PSSQHKKPPG (201 aa)) are GRASP. Zn(2+) is bound by residues histidine 17, histidine 19, and cysteine 102. The tract at residues 189 to 201 (LGCGIGYGYLHRI) is essential for interaction with GOLGA2/GM130. Disordered regions lie at residues 202–252 (PTQP…LGSR) and 343–446 (VSGP…EPGL). 3 positions are modified to phosphothreonine: threonine 216, threonine 220, and threonine 224. A compositionally biased stretch (low complexity) spans 343-354 (VSGPEDIGSSSS). Residues serine 365, serine 367, and serine 376 each carry the phosphoserine modification.

It belongs to the GORASP family. As to quaternary structure, homodimer. Forms higher-order oligomers under interphase but not mitotic conditions. Dimers of the protein on one membrane might be able to interact with dimers on another and so stack cisternae. Interacts with the C-terminus of GOLGA2/GM130 under both mitotic and non-mitotic conditions. The interaction is critical for the correct targeting of both proteins to the cis-Golgi. Interacts with TMED2 and TMED3. Phosphorylated by CDC2/B1 and PLK kinases during mitosis. Phosphorylation cycle correlates with the cisternal stacking cycle. Phosphorylation of the homodimer prevents the association of dimers into higher-order oligomers, leading to cisternal unstacking. Post-translationally, target for caspase-3 cleavage during apoptosis. The cleavage contributes to Golgi fragmentation and occurs very early in the execution phase of apoptosis. In terms of processing, myristoylated.

The protein resides in the golgi apparatus. The protein localises to the cis-Golgi network membrane. Functionally, key structural protein of the Golgi apparatus. The membrane cisternae of the Golgi apparatus adhere to each other to form stacks, which are aligned side by side to form the Golgi ribbon. Acting in concert with GORASP2/GRASP55, is required for the formation and maintenance of the Golgi ribbon, and may be dispensable for the formation of stacks. However, other studies suggest that GORASP1 plays an important role in assembly and membrane stacking of the cisternae, and in the reassembly of Golgi stacks after breakdown during mitosis. Caspase-mediated cleavage of GORASP1 is required for fragmentation of the Golgi during apoptosis. Also mediates, via its interaction with GOLGA2/GM130, the docking of transport vesicles with the Golgi membranes. Mediates ER stress-induced unconventional (ER/Golgi-independent) trafficking of core-glycosylated CFTR to cell membrane. This is Golgi reassembly-stacking protein 1 (Gorasp1) from Mus musculus (Mouse).